Consider the following 77-residue polypeptide: MADVLERVTKIVVDRLGVEETEVVPAASFKEDLGADSLDVVELVMQLEDEFEMEISDEDAEKIATVGDAVTYIESHL.

The Carrier domain occupies 2-77 (ADVLERVTKI…DAVTYIESHL (76 aa)). Ser-37 carries the post-translational modification O-(pantetheine 4'-phosphoryl)serine.

It belongs to the acyl carrier protein (ACP) family. In terms of processing, 4'-phosphopantetheine is transferred from CoA to a specific serine of apo-ACP by AcpS. This modification is essential for activity because fatty acids are bound in thioester linkage to the sulfhydryl of the prosthetic group.

It localises to the cytoplasm. It participates in lipid metabolism; fatty acid biosynthesis. Functionally, carrier of the growing fatty acid chain in fatty acid biosynthesis. This chain is Acyl carrier protein, found in Bacillus mycoides (strain KBAB4) (Bacillus weihenstephanensis).